The primary structure comprises 410 residues: Bifunctional malic/malolactic enzyme (410 aa).

Tyr-36 functions as the Proton donor in the catalytic mechanism. The active-site Proton acceptor is Lys-91. A divalent metal cation-binding residues include Glu-133, Asp-134, and Asp-159. NADP(+) contacts are provided by residues 192 to 195 (AGAA), Asn-286, and Asn-317.

The protein belongs to the malic enzymes family. Interacts with BrxC. Mg(2+) serves as cofactor. The cofactor is Mn(2+).

It carries out the reaction (S)-malate + NADP(+) = pyruvate + CO2 + NADPH. It catalyses the reaction oxaloacetate + H(+) = pyruvate + CO2. The enzyme catalyses (S)-malate + H(+) = (S)-lactate + CO2. With respect to regulation, NADPH is a strong modulator that switches activity from a pyruvate-producing malic enzyme to a lactate-generating malolactic enzyme. Its function is as follows. Bifunctional enzyme with both malic and malolactic enzyme activities. In the absence of NADPH, catalyzes the reversible decarboxylation of malate to pyruvate. Can use NAD and NADP, but with a very strong preference for NADP. In the presence of excess NADPH, catalyzes the non-oxidative decarboxylation of malate to lactate. During growth on glucose, contributes to NADPH balancing via oxidation of the NADPH produced in excess by other enzymatic reactions. Can also catalyze the decarboxylation of oxaloacetate. This is Bifunctional malic/malolactic enzyme (ytsJ) from Bacillus subtilis (strain 168).